We begin with the raw amino-acid sequence, 483 residues long: Betaine aldehyde dehydrogenase (483 aa).

Positions 27 and 93 each coordinate K(+). 149 to 151 (GAW) serves as a coordination point for NAD(+). K161 (charge relay system) is an active-site residue. Residue 175 to 178 (KPSE) participates in NAD(+) binding. V179 lines the K(+) pocket. Position 228–231 (228–231 (SVPT)) interacts with NAD(+). V243 provides a ligand contact to K(+). The active-site Proton acceptor is E249. Positions 251, 283, and 380 each coordinate NAD(+). Catalysis depends on C283, which acts as the Nucleophile. At C283 the chain carries Cysteine sulfenic acid (-SOH). K(+) contacts are provided by K450 and G453. The Charge relay system role is filled by E457.

Belongs to the aldehyde dehydrogenase family. Dimer of dimers. K(+) serves as cofactor.

The catalysed reaction is betaine aldehyde + NAD(+) + H2O = glycine betaine + NADH + 2 H(+). It functions in the pathway amine and polyamine biosynthesis; betaine biosynthesis via choline pathway; betaine from betaine aldehyde: step 1/1. Involved in the biosynthesis of the osmoprotectant glycine betaine. Catalyzes the irreversible oxidation of betaine aldehyde to the corresponding acid. The polypeptide is Betaine aldehyde dehydrogenase (Cereibacter sphaeroides (strain ATCC 17029 / ATH 2.4.9) (Rhodobacter sphaeroides)).